The chain runs to 128 residues: Sulfurtransferase TusD (128 aa).

C78 acts as the Cysteine persulfide intermediate in catalysis.

This sequence belongs to the DsrE/TusD family. As to quaternary structure, heterohexamer, formed by a dimer of trimers. The hexameric TusBCD complex contains 2 copies each of TusB, TusC and TusD. The TusBCD complex interacts with TusE.

The protein resides in the cytoplasm. Its function is as follows. Part of a sulfur-relay system required for 2-thiolation of 5-methylaminomethyl-2-thiouridine (mnm(5)s(2)U) at tRNA wobble positions. Accepts sulfur from TusA and transfers it in turn to TusE. The protein is Sulfurtransferase TusD of Salmonella agona (strain SL483).